An 804-amino-acid chain; its full sequence is DEP domain-containing protein 1A (804 aa).

A DEP domain is found at 24–108 (FRVGMPLRKH…DNNQLFRFPA (85 aa)). Residues 282–322 (DYFLNLPEPLLTFEYYELFVNILVVCGYITVSDRTSGIHKI) form the Rho-GAP domain. At Ser513 the chain carries Phosphoserine. Residues 592-647 (AINALQLCCLLLPPPNRRKLQLLMRMISRMSQNVDMPKLHEQIGTRSLMINTFSRC) form an interaction with ZNF224 region. Positions 726-760 (EQKISTSQAAIAELLENIVRSKSLSLKEKRRKLKQ) form a coiled coil.

As to quaternary structure, can form dimers. Interacts with ZNF224.

It localises to the nucleus. May be involved in transcriptional regulation as a transcriptional corepressor. The DEPDC1A-ZNF224 complex may play a critical role in bladder carcinogenesis by repressing the transcription of the A20 gene, leading to transport of NF-KB protein into the nucleus, resulting in suppression of apoptosis of bladder cancer cells. This chain is DEP domain-containing protein 1A (Depdc1a), found in Mus musculus (Mouse).